The chain runs to 392 residues: Pannexin-3 (392 aa).

Residues 1–39 lie on the Cytoplasmic side of the membrane; that stretch reads MSLAHTAAEYMLSDALLPDRRGPRLKGLRLELPLDRIVK. Residues 40–60 traverse the membrane as a helical segment; that stretch reads FVAVGSPLLLMSLAFAQEFSS. Residues 61–113 are Extracellular-facing; it reads GSPISCFSPSNFSIRQAAYVDSSCWDSLLHHKQDGPGQDKMKSLWPHKALPYS. Asn71 carries N-linked (GlcNAc...) asparagine glycosylation. The chain crosses the membrane as a helical span at residues 114–134; it reads LLALALLMYLPVLLWQYAAVP. Over 135–215 the chain is Cytoplasmic; the sequence is ALSSDLLFII…VATYLLRNSL (81 aa). The chain crosses the membrane as a helical span at residues 216–236; sequence LLIFTSATYLYLGHFHLDVFF. The Extracellular segment spans residues 237–267; it reads QEEFSCSIKTGLLSDETHVPNLITCRLTSLS. Residues 268-288 traverse the membrane as a helical segment; it reads IFQIVSLSSVAIYTILVPVII. Residues 289 to 392 lie on the Cytoplasmic side of the membrane; the sequence is YNLTRLCRWD…LTNSACDEHP (104 aa).

This sequence belongs to the pannexin family. In terms of assembly, homoheptameric.

It localises to the cell membrane. Its subcellular location is the cell junction. It is found in the gap junction. The protein localises to the endoplasmic reticulum membrane. The catalysed reaction is Ca(2+)(in) = Ca(2+)(out). It carries out the reaction ATP(in) = ATP(out). Regulator of osteoblast differentiation by functionning as a Ca(2+) channel in the endoplasmic reticulum which regulates calmodulin (CaM) pathways. Allows ATP release into the extracellular space and activation or purinergic receptors. This Homo sapiens (Human) protein is Pannexin-3.